The sequence spans 207 residues: Putative tributyltin chloride resistance protein (207 aa).

A slt-type domain region spans residues 37 to 122 (NLPIELALMP…YHAIAALNLG (86 aa)). Glu-49 is an active-site residue.

This sequence belongs to the transglycosylase Slt family.

This chain is Putative tributyltin chloride resistance protein (tbtA), found in Alteromonas sp. (strain M-1).